Here is an 89-residue protein sequence, read N- to C-terminus: uncharacterized protein (89 aa).

The segment at 31–89 (TPQPLEPHEHPKPMEPNEFDPKPDDPPRNPDPSPFPNEVPKPKPSDFPIPDELYPQPIV) is disordered. A compositionally biased stretch (basic and acidic residues) spans 36 to 58 (EPHEHPKPMEPNEFDPKPDDPPR). Residues 59–69 (NPDPSPFPNEV) show a composition bias toward pro residues.

This is an uncharacterized protein from Dictyostelium discoideum (Social amoeba).